The following is a 106-amino-acid chain: CRISPR-associated endoribonuclease Cas2 (106 aa).

Mg(2+) is bound at residue aspartate 8. Residues 86–106 (EEAAEAAVSYPGRSRKKARAG) form a disordered region.

The protein belongs to the CRISPR-associated endoribonuclease Cas2 protein family. As to quaternary structure, homodimer, forms a heterotetramer with a Cas1 homodimer. Requires Mg(2+) as cofactor.

In terms of biological role, CRISPR (clustered regularly interspaced short palindromic repeat), is an adaptive immune system that provides protection against mobile genetic elements (viruses, transposable elements and conjugative plasmids). CRISPR clusters contain sequences complementary to antecedent mobile elements and target invading nucleic acids. CRISPR clusters are transcribed and processed into CRISPR RNA (crRNA). Functions as a ssRNA-specific endoribonuclease. Involved in the integration of spacer DNA into the CRISPR cassette. The sequence is that of CRISPR-associated endoribonuclease Cas2 from Desulforudis audaxviator (strain MP104C).